We begin with the raw amino-acid sequence, 180 residues long: UPF0227 protein YcfP (180 aa).

This sequence belongs to the UPF0227 family.

The chain is UPF0227 protein YcfP from Escherichia coli O139:H28 (strain E24377A / ETEC).